The sequence spans 264 residues: Hemin import ATP-binding protein HmuV (264 aa).

Positions 2 to 242 constitute an ABC transporter domain; sequence IEAVNICVQR…QNLSDAYHCS (241 aa). 34 to 41 contacts ATP; it reads GPNGSGKS.

This sequence belongs to the ABC transporter superfamily. Heme (hemin) importer (TC 3.A.1.14.5) family. The complex is composed of two ATP-binding proteins (HmuV), two transmembrane proteins (HmuU) and a solute-binding protein (HmuT).

The protein localises to the cell inner membrane. Part of the ABC transporter complex HmuTUV involved in hemin import. Responsible for energy coupling to the transport system. The chain is Hemin import ATP-binding protein HmuV from Bartonella quintana (strain Toulouse) (Rochalimaea quintana).